We begin with the raw amino-acid sequence, 309 residues long: NADH-cytochrome b5 reductase 1 (309 aa).

The helical transmembrane segment at F30–G50 threads the bilayer. One can recognise an FAD-binding FR-type domain in the interval T60–T165. FAD contacts are provided by residues T145–G160 and H171–L208.

This sequence belongs to the flavoprotein pyridine nucleotide cytochrome reductase family. In terms of assembly, monomer. Component of the 2-(3-amino-3-carboxypropyl)histidine synthase complex composed of dph1, dph2, dph3 and a NADH-dependent reductase, predominantly cbr1. Requires FAD as cofactor.

Its subcellular location is the mitochondrion outer membrane. The catalysed reaction is 2 Fe(III)-[cytochrome b5] + NADH = 2 Fe(II)-[cytochrome b5] + NAD(+) + H(+). It carries out the reaction 2 Fe(3+)-[Dph3] + NADH = 2 Fe(2+)-[Dph3] + NAD(+) + H(+). The protein operates within protein modification; peptidyl-diphthamide biosynthesis. In terms of biological role, NADH-dependent reductase for dph3 and cytochrome b5. Required for the first step of diphthamide biosynthesis, a post-translational modification of histidine which occurs in elongation factor 2. Dph1 and dph2 transfer a 3-amino-3-carboxypropyl (ACP) group from S-adenosyl-L-methionine (SAM) to a histidine residue, the reaction is assisted by a reduction system comprising dph3 and a NADH-dependent reductase, predominantly cbr1. By reducing dph3, also involved in the formation of the tRNA wobble base modification mcm5s 2U (5-methoxycarbonylmethyl-2-thiouridine), mediated by the elongator complex. The cytochrome b5/NADH cytochrome b5 reductase electron transfer system supports the catalytic activity of several sterol biosynthetic enzymes. This is NADH-cytochrome b5 reductase 1 (cbr1) from Neosartorya fischeri (strain ATCC 1020 / DSM 3700 / CBS 544.65 / FGSC A1164 / JCM 1740 / NRRL 181 / WB 181) (Aspergillus fischerianus).